A 174-amino-acid polypeptide reads, in one-letter code: UPF0316 protein Dhaf_3052 (174 aa).

Transmembrane regions (helical) follow at residues 4 to 24 (ILQF…LTTI), 35 to 55 (VYAS…LSII), and 59 to 79 (LDSY…VYLG).

Belongs to the UPF0316 family.

It localises to the cell membrane. The chain is UPF0316 protein Dhaf_3052 from Desulfitobacterium hafniense (strain DSM 10664 / DCB-2).